We begin with the raw amino-acid sequence, 336 residues long: Ferredoxin--NADP reductase (336 aa).

FAD contacts are provided by glutamate 34, glutamine 42, tyrosine 47, valine 87, phenylalanine 121, aspartate 286, and serine 326.

Belongs to the ferredoxin--NADP reductase type 2 family. As to quaternary structure, homodimer. It depends on FAD as a cofactor.

It carries out the reaction 2 reduced [2Fe-2S]-[ferredoxin] + NADP(+) + H(+) = 2 oxidized [2Fe-2S]-[ferredoxin] + NADPH. The polypeptide is Ferredoxin--NADP reductase (Leuconostoc mesenteroides subsp. mesenteroides (strain ATCC 8293 / DSM 20343 / BCRC 11652 / CCM 1803 / JCM 6124 / NCDO 523 / NBRC 100496 / NCIMB 8023 / NCTC 12954 / NRRL B-1118 / 37Y)).